A 187-amino-acid polypeptide reads, in one-letter code: Putative gamma-glutamylcyclotransferase At3g02910 (187 aa).

Residue 17-20 participates in substrate binding; the sequence is YGTL. Catalysis depends on Glu92, which acts as the Proton acceptor.

This sequence belongs to the gamma-glutamylcyclotransferase family.

In terms of biological role, putative gamma-glutamylcyclotransferase. The polypeptide is Putative gamma-glutamylcyclotransferase At3g02910 (Arabidopsis thaliana (Mouse-ear cress)).